A 37-amino-acid chain; its full sequence is Photosystem II reaction center protein T (37 aa).

The helical transmembrane segment at Ala3 to Phe23 threads the bilayer.

It belongs to the PsbT family. In terms of assembly, PSII is composed of 1 copy each of membrane proteins PsbA, PsbB, PsbC, PsbD, PsbE, PsbF, PsbH, PsbI, PsbJ, PsbK, PsbL, PsbM, PsbT, PsbY, PsbZ, Psb30/Ycf12, at least 3 peripheral proteins of the oxygen-evolving complex and a large number of cofactors. It forms dimeric complexes.

The protein localises to the plastid. The protein resides in the chloroplast thylakoid membrane. Its function is as follows. Found at the monomer-monomer interface of the photosystem II (PS II) dimer, plays a role in assembly and dimerization of PSII. PSII is a light-driven water plastoquinone oxidoreductase, using light energy to abstract electrons from H(2)O, generating a proton gradient subsequently used for ATP formation. This is Photosystem II reaction center protein T from Ephedra sinica (Chinese ephedra).